The primary structure comprises 469 residues: ATP synthase subunit beta (469 aa).

An ATP-binding site is contributed by 153–160 (GGAGVGKT).

It belongs to the ATPase alpha/beta chains family. F-type ATPases have 2 components, CF(1) - the catalytic core - and CF(0) - the membrane proton channel. CF(1) has five subunits: alpha(3), beta(3), gamma(1), delta(1), epsilon(1). CF(0) has three main subunits: a(1), b(2) and c(9-12). The alpha and beta chains form an alternating ring which encloses part of the gamma chain. CF(1) is attached to CF(0) by a central stalk formed by the gamma and epsilon chains, while a peripheral stalk is formed by the delta and b chains.

The protein localises to the cell membrane. It catalyses the reaction ATP + H2O + 4 H(+)(in) = ADP + phosphate + 5 H(+)(out). Its function is as follows. Produces ATP from ADP in the presence of a proton gradient across the membrane. The catalytic sites are hosted primarily by the beta subunits. The chain is ATP synthase subunit beta from Pediococcus pentosaceus (strain ATCC 25745 / CCUG 21536 / LMG 10740 / 183-1w).